The following is a 652-amino-acid chain: MNKQQKEFKSFYSIRKSSLGVASVAISTLLLLMSNGEAKAAEETGVTNTEAQPKTEAVASPTTTTTEKAPEAKPVAKPVANAVSVSNKEVVAPTTETKEAKEVKAVKEVKAPKEAKEEKPAAKADNNTYPILNQELREAIKNPAIKDKDHSAPNSRPIDFEMKKKDGTQQFYHYASSVKPARVIFTDSKPEIELGLQSGQFWRKFEVYEGDKKLPIKLVSYDTVKDYAYIRFSVSNGTKAVKIVSSTHFNNKEEKYDYTLMEFAQPIYNSADKFKTEEDYKAEKLLAPYKKAKTLERQVYELNKIQDKLPEKLKAEYKKKLEETKKALDEQVKSAITEFQNVQPTNEKMTDLQDTKYVVYESVENNESMMDAFVKHPIKTGMLNGKKYMVMETTNDDYWKDFMVEGQRVRTISKDAKNNTRTIIFPYVEGKTLYDAIVKVHVKTIDYDGQYHVRIVDKEAFTKANADKTNKKEQQDNSAKKETTPAMPSKPTTPPVEKESQKQDSQKDDNKQSPSVEKENDASSESGKDKMPVTKPAKAEVESSSTTPTKVVSTTQNVAKPTTASSETTKDVVQTSAGSSEAKDSAPLQKANIKNTNDGHTQSQNNKNTQENKAKSLPQTGEESNKDMTLPLMALIALSSIVAFVLPRKRKN.

The N-terminal stretch at 1-40 (MNKQQKEFKSFYSIRKSSLGVASVAISTLLLLMSNGEAKA) is a signal peptide. Positions 12-23 (YSIRKSSLGVAS) match the YSIRK-G/S signaling motif motif. Residues 41–75 (AEETGVTNTEAQPKTEAVASPTTTTTEKAPEAKPV) are disordered. Over residues 54–75 (KTEAVASPTTTTTEKAPEAKPV) the composition is skewed to low complexity. NEAT domains follow at residues 151–276 (SAPN…KFKT) and 348–465 (KMTD…TKAN). M369 and Y447 together coordinate heme. 2 stretches are compositionally biased toward basic and acidic residues: residues 466–483 (ADKTNKKEQQDNSAKKET) and 496–541 (VEKE…KAEV). Residues 466-626 (ADKTNKKEQQ…LPQTGEESNK (161 aa)) are disordered. Low complexity predominate over residues 542–555 (ESSSTTPTKVVSTT). Polar residues-rich tracts occupy residues 556-579 (QNVAKPTTASSETTKDVVQTSAGS) and 592-622 (NIKNTNDGHTQSQNNKNTQENKAKSLPQTGE). The short motif at 617–621 (LPQTG) is the LPXTG sorting signal element. Pentaglycyl murein peptidoglycan amidated threonine is present on T620. The propeptide at 621 to 652 (GEESNKDMTLPLMALIALSSIVAFVLPRKRKN) is removed by sortase.

Belongs to the IsdB family. As to quaternary structure, interacts with host HBA; this interaction allows heme extraction as iron source. Interacts with IsdA.

Its subcellular location is the secreted. The protein localises to the cell wall. Functionally, cell wall-anchored surface receptor that extracts heme from oxidized metHb to enable growth on hemoglobin as a sole iron source. Rapidly extracts heme from hemoglobin and transfers it to IsdA or IsdC, which then relays it to the membrane transporter/IsdEF for internalization. Also promotes resistance to hydrogen peroxide and killing by neutrophils. This chain is Iron-regulated surface determinant protein B (isdB), found in Staphylococcus aureus (strain MRSA252).